Consider the following 126-residue polypeptide: Large ribosomal subunit protein bL12 (126 aa).

The protein belongs to the bacterial ribosomal protein bL12 family. In terms of assembly, homodimer. Part of the ribosomal stalk of the 50S ribosomal subunit. Forms a multimeric L10(L12)X complex, where L10 forms an elongated spine to which 2 to 4 L12 dimers bind in a sequential fashion. Binds GTP-bound translation factors.

Functionally, forms part of the ribosomal stalk which helps the ribosome interact with GTP-bound translation factors. Is thus essential for accurate translation. The chain is Large ribosomal subunit protein bL12 from Acidovorax ebreus (strain TPSY) (Diaphorobacter sp. (strain TPSY)).